Reading from the N-terminus, the 154-residue chain is Probable deoxyuridine 5'-triphosphate nucleotidohydrolase (154 aa).

It belongs to the dCTP deaminase family. Archaeal dUTPase subfamily.

It catalyses the reaction dUTP + H2O = dUMP + diphosphate + H(+). The protein operates within pyrimidine metabolism; dUMP biosynthesis; dUMP from dCTP (dUTP route): step 2/2. Its function is as follows. This enzyme is involved in nucleotide metabolism: it produces dUMP, the immediate precursor of thymidine nucleotides and it decreases the intracellular concentration of dUTP so that uracil cannot be incorporated into DNA. The chain is Probable deoxyuridine 5'-triphosphate nucleotidohydrolase from Methanopyrus kandleri (strain AV19 / DSM 6324 / JCM 9639 / NBRC 100938).